The sequence spans 158 residues: Large ribosomal subunit protein uL15 (158 aa).

Over residues 1-13 (MKLNEIKDNEGST) the composition is skewed to basic and acidic residues. Residues 1 to 45 (MKLNEIKDNEGSTHSRKRLGRGIGSGSGKTGGRGVKGQKSRSGVA) form a disordered region. Positions 21 to 35 (RGIGSGSGKTGGRGV) are enriched in gly residues.

Belongs to the universal ribosomal protein uL15 family. Part of the 50S ribosomal subunit.

Functionally, binds to the 23S rRNA. This Rhizobium johnstonii (strain DSM 114642 / LMG 32736 / 3841) (Rhizobium leguminosarum bv. viciae) protein is Large ribosomal subunit protein uL15.